A 95-amino-acid polypeptide reads, in one-letter code: Co-chaperonin GroES (95 aa).

The protein belongs to the GroES chaperonin family. As to quaternary structure, heptamer of 7 subunits arranged in a ring. Interacts with the chaperonin GroEL.

It localises to the cytoplasm. Together with the chaperonin GroEL, plays an essential role in assisting protein folding. The GroEL-GroES system forms a nano-cage that allows encapsulation of the non-native substrate proteins and provides a physical environment optimized to promote and accelerate protein folding. GroES binds to the apical surface of the GroEL ring, thereby capping the opening of the GroEL channel. The sequence is that of Co-chaperonin GroES from Francisella tularensis subsp. tularensis (strain FSC 198).